Reading from the N-terminus, the 535-residue chain is Probable lipid II flippase MurJ (535 aa).

The next 12 helical transmembrane spans lie at 90–110 (VLFT…PFIV), 131–151 (FATI…MAGM), 159–179 (FAAA…LAYA), 192–212 (DLSW…WVAV), 233–253 (LLVL…NLLI), 274–294 (IYQL…LPEL), 316–336 (FTLF…EPIV), 350–370 (TVVV…FVLI), 388–408 (IFAG…FPSL), 413–433 (IATA…ATLV), 451–471 (LVIA…WLAF), and 484–504 (LTLC…AFGI).

Belongs to the MurJ/MviN family.

The protein resides in the cell inner membrane. Its pathway is cell wall biogenesis; peptidoglycan biosynthesis. Functionally, involved in peptidoglycan biosynthesis. Transports lipid-linked peptidoglycan precursors from the inner to the outer leaflet of the cytoplasmic membrane. In Rhizobium meliloti (strain 1021) (Ensifer meliloti), this protein is Probable lipid II flippase MurJ.